A 317-amino-acid chain; its full sequence is Putative HTH-type transcriptional regulatory protein Mboo_0195 (317 aa).

The region spanning 132–185 (LRELRERRSMSLGDLGQVLGVSRRTISKYESGMGTTLEVAIRIEEYFNTGVVES) is the HTH cro/C1-type domain. Residues 143–162 (LGDLGQVLGVSRRTISKYES) constitute a DNA-binding region (H-T-H motif).

The protein is Putative HTH-type transcriptional regulatory protein Mboo_0195 of Methanoregula boonei (strain DSM 21154 / JCM 14090 / 6A8).